We begin with the raw amino-acid sequence, 529 residues long: Probable biotin-dependent acyl-coenzyme A carboxylase beta2 subunit (529 aa).

One can recognise a CoA carboxyltransferase N-terminal domain in the interval 20-271 (MSGKLDEINA…IKQGPAPAPV (252 aa)). The CoA carboxyltransferase C-terminal domain maps to 270-520 (PVTEPLFDAE…SAIANGPIKG (251 aa)).

Belongs to the AccD/PCCB family. As to quaternary structure, the biotin-dependent acyl-CoA carboxylase complex is composed of an AccA protein, which contains the biotin carboxylase (BC) and biotin carboxyl carrier protein (BCCP) domains, and an AccD protein, which contains the carboxyl transferase (CT) domain.

Its function is as follows. Component of a biotin-dependent acyl-CoA carboxylase complex. This subunit transfers the CO2 from carboxybiotin to the CoA ester substrate. The protein is Probable biotin-dependent acyl-coenzyme A carboxylase beta2 subunit (accD2) of Mycobacterium tuberculosis (strain ATCC 25618 / H37Rv).